A 133-amino-acid chain; its full sequence is MIKIKKRKRNTYEVYALGQHICMSPHKARRIIDQIRGRSYEETLMILELMPYRACYPIFKLIYSAAANASHNMGFNEANLIISKAEVNEGTTVKKLKPQARGRGYPIKRSTCHISIVLKNISLYEEYDEYIYI.

The protein belongs to the universal ribosomal protein uL22 family. As to quaternary structure, part of the 50S ribosomal subunit.

The protein localises to the plastid. It localises to the chloroplast. In terms of biological role, this protein binds specifically to 23S rRNA. The globular domain of the protein is located near the polypeptide exit tunnel on the outside of the subunit, while an extended beta-hairpin is found that lines the wall of the exit tunnel in the center of the 70S ribosome. This is Large ribosomal subunit protein uL22c (rpl22) from Manihot esculenta (Cassava).